We begin with the raw amino-acid sequence, 673 residues long: UvrABC system protein B (673 aa).

The Helicase ATP-binding domain occupies 26–183; the sequence is EGLEDGLAHQ…RRLAELQYTR (158 aa). 39–46 serves as a coordination point for ATP; that stretch reads GVTGSGKT. The Beta-hairpin signature appears at 92-115; that stretch reads YYDYYQPEAYVPSSDTFIEKDASV. The Helicase C-terminal domain maps to 431-597; it reads QVDDLLSEIR…GLNKKVVDIL (167 aa). Residues 633–668 enclose the UVR domain; sequence QQKIHELEGQMMQHAQNLEFEEAAQIRDQLHQLREL.

This sequence belongs to the UvrB family. In terms of assembly, forms a heterotetramer with UvrA during the search for lesions. Interacts with UvrC in an incision complex.

The protein resides in the cytoplasm. The UvrABC repair system catalyzes the recognition and processing of DNA lesions. A damage recognition complex composed of 2 UvrA and 2 UvrB subunits scans DNA for abnormalities. Upon binding of the UvrA(2)B(2) complex to a putative damaged site, the DNA wraps around one UvrB monomer. DNA wrap is dependent on ATP binding by UvrB and probably causes local melting of the DNA helix, facilitating insertion of UvrB beta-hairpin between the DNA strands. Then UvrB probes one DNA strand for the presence of a lesion. If a lesion is found the UvrA subunits dissociate and the UvrB-DNA preincision complex is formed. This complex is subsequently bound by UvrC and the second UvrB is released. If no lesion is found, the DNA wraps around the other UvrB subunit that will check the other stand for damage. This is UvrABC system protein B from Klebsiella pneumoniae subsp. pneumoniae (strain ATCC 700721 / MGH 78578).